We begin with the raw amino-acid sequence, 451 residues long: Cysteine protease ATG4 (451 aa).

Residue Cys122 is the Nucleophile of the active site. Catalysis depends on residues Asp297 and His299.

It belongs to the peptidase C54 family. Interacts with ATG8.

It is found in the cytoplasm. It localises to the nucleus. The protein localises to the preautophagosomal structure. The enzyme catalyses [protein]-C-terminal L-amino acid-glycyl-phosphatidylethanolamide + H2O = [protein]-C-terminal L-amino acid-glycine + a 1,2-diacyl-sn-glycero-3-phosphoethanolamine. Its function is as follows. Cysteine protease that plays a key role in cytoplasm to vacuole transport (Cvt) and autophagy by mediating both proteolytic activation and delipidation of ATG8. Required for selective autophagic degradation of the nucleus (nucleophagy) as well as for mitophagy which contributes to regulate mitochondrial quantity and quality by eliminating the mitochondria to a basal level to fulfill cellular energy requirements and preventing excess ROS production. The protease activity is required for proteolytic activation of ATG8: cleaves the C-terminal amino acid of ATG8 to reveal a C-terminal glycine. ATG8 ubiquitin-like activity requires the exposure of the glycine at the C-terminus for its conjugation to phosphatidylethanolamine (PE) and its insertion to membranes, which is necessary for autophagy. The ATG8-PE conjugate mediates tethering between adjacent membranes and stimulates membrane hemifusion, leading to expansion of the autophagosomal membrane during autophagy. In addition to the protease activity, also catalyzes deconjugation of PE-conjugated forms of ATG8 during macroautophagy: ATG8 delipidation is required to release the protein from membranes, which facilitates multiple events during macroautophagy, and especially for efficient autophagosome biogenesis, the assembly of ATG9-containing tubulovesicular clusters into phagophores/autophagosomes, and for the disassembly of PAS-associated ATG components. ATG8 delipidation by ATG4 also recycles ATG8-PE generated on inappropriate membranes to maintain a reservoir of unlipidated ATG8 that is required for autophagosome formation at the PAS. The polypeptide is Cysteine protease ATG4 (Kluyveromyces marxianus (strain DMKU3-1042 / BCC 29191 / NBRC 104275) (Yeast)).